Reading from the N-terminus, the 91-residue chain is Non-specific lipid-transfer protein P5 (91 aa).

4 disulfides stabilise this stretch: Cys-3–Cys-50, Cys-13–Cys-27, Cys-28–Cys-73, and Cys-48–Cys-87.

The protein localises to the secreted. Functionally, plant non-specific lipid-transfer proteins transfer phospholipids as well as galactolipids across membranes. May play a role in wax or cutin deposition in the cell walls of expanding epidermal cells and certain secretory tissues. The protein is Non-specific lipid-transfer protein P5 of Vitis sp. (Grape).